A 575-amino-acid polypeptide reads, in one-letter code: FAD-dependent monooxygenase rstn6 (575 aa).

The first 17 residues, 1-17 (MYDVIVIGAGWCGLVAA), serve as a signal peptide directing secretion. An FAD-binding site is contributed by I106. N239 and N295 each carry an N-linked (GlcNAc...) asparagine glycan.

It belongs to the FAD-binding monooxygenase family. FAD is required as a cofactor.

The protein operates within antifungal biosynthesis. FAD-dependent monooxygenase; part of the gene cluster that mediates the biosynthesis of the tetrahydropyranyl antifungal agent restricticin that acts as an inhibitor of CYP51 and blocks the ergosterol biosynthesis. The highly reducing polyketide synthase rstn3, the short chain dehydrogenase rstn4, the cyclase rstn5, the FAD-dependent monooxygenase rstn6 and the enoylreductase rstn7 are required to generate the first stable intermediate desmethylrestrictinol. Rstn3 with rstn7 biosynthesize the first polyketide chain intermediate that is reduced by rstn4, followed by epoxidation by rstn6 before 6-endo cyclization via epoxide opening by rstn5 leads to desmethylrestrictinol. The methyltransferase rstn1 then catalyzes the C4 O-methylation of desmethylrestrictinol to produce restrictinol, and the nonribosomal peptide synthetase rstn8 catalyzes the C3 esterification of restrictinol with glycine that leads to restricticin. The chain is FAD-dependent monooxygenase rstn6 from Aspergillus nomiae NRRL (strain ATCC 15546 / NRRL 13137 / CBS 260.88 / M93).